The sequence spans 478 residues: Zinc metalloproteinase/disintegrin VMP-II (478 aa).

An N-terminal signal peptide occupies residues 1-20 (MIQVLLVTICLAVFPYQGSS). The propeptide occupies 21–190 (IILESGNVND…KASQLNLTPE (170 aa)). The 197-residue stretch at 197-393 (RYIELVIVAD…HNPQCMLNEP (197 aa)) folds into the Peptidase M12B domain. Residues Glu-200 and Asp-284 each coordinate Ca(2+). 3 disulfide bridges follow: Cys-308/Cys-388, Cys-348/Cys-372, and Cys-350/Cys-355. Residue His-333 participates in Zn(2+) binding. Residue Glu-334 is part of the active site. Residues His-337 and His-343 each coordinate Zn(2+). Residues Cys-388 and Asn-391 each contribute to the Ca(2+) site. Positions 394–405 (LGTDTVSRNELL) are excised as a propeptide. The Disintegrin domain maps to 414–478 (GSPANPCCDA…ADCPRNRFHA (65 aa)). Cystine bridges form between Cys-420–Cys-443, Cys-434–Cys-440, Cys-439–Cys-464, and Cys-452–Cys-471. Positions 456–458 (RGD) match the Cell attachment site motif.

The protein belongs to the venom metalloproteinase (M12B) family. P-II subfamily. P-IIe sub-subfamily. In terms of assembly, heterodimer; disulfide-linked (disintegrin). The cofactor is Zn(2+). Expressed by the venom gland.

It is found in the secreted. Impairs hemostasis in the envenomed animal. In terms of biological role, this recombinant protein inhibits ADP-induced platelet aggregation in whole human blood and this effect is concentration-dependent with an IC(50) of 34 nM. This Crotalus viridis viridis (Prairie rattlesnake) protein is Zinc metalloproteinase/disintegrin VMP-II.